Reading from the N-terminus, the 378-residue chain is Coiled-coil domain-containing protein 74A (378 aa).

Disordered stretches follow at residues 1-52, 128-211, and 301-328; these read MSGA…RNLD, GGPS…EEPL, and EGSQRPQAAPEEASFPRDQEATHFPKVS. Polar residues predominate over residues 34–44; sequence LRPQSPQLRQS. The stretch at 47–90 forms a coiled coil; that stretch reads QKRNLDLEKSLQFLQQQHSEMLAKLHEEIEHLKRENKDLHYKLI. Positions 141-151 are enriched in basic residues; the sequence is RTHRPGGKRGR. Over residues 165–182 the composition is skewed to polar residues; it reads DSLSMSSFQSVKSISNSG. Basic and acidic residues-rich tracts occupy residues 194-205 and 314-323; these read QDSKADVSQKAD and SFPRDQEATH.

This chain is Coiled-coil domain-containing protein 74A (CCDC74A), found in Homo sapiens (Human).